The primary structure comprises 164 residues: Succinate dehydrogenase assembly factor 2, mitochondrial (164 aa).

Belongs to the SDHAF2 family. Interacts with the flavoprotein subunit within the SDH catalytic dimer.

It is found in the mitochondrion matrix. Its function is as follows. Plays an essential role in the assembly of succinate dehydrogenase (SDH), an enzyme complex (also referred to as respiratory complex II) that is a component of both the tricarboxylic acid (TCA) cycle and the mitochondrial electron transport chain, and which couples the oxidation of succinate to fumarate with the reduction of ubiquinone (coenzyme Q) to ubiquinol. Required for flavinylation (covalent attachment of FAD) of the flavoprotein subunit of the SDH catalytic dimer. The protein is Succinate dehydrogenase assembly factor 2, mitochondrial of Lodderomyces elongisporus (strain ATCC 11503 / CBS 2605 / JCM 1781 / NBRC 1676 / NRRL YB-4239) (Yeast).